Reading from the N-terminus, the 354-residue chain is tRNA N6-adenosine threonylcarbamoyltransferase (354 aa).

Histidine 111 and histidine 115 together coordinate Fe cation. Substrate is bound by residues leucine 134–glycine 138, aspartate 167, glycine 180, and asparagine 279. A Fe cation-binding site is contributed by aspartate 319.

It belongs to the KAE1 / TsaD family. Fe(2+) serves as cofactor.

It is found in the cytoplasm. It catalyses the reaction L-threonylcarbamoyladenylate + adenosine(37) in tRNA = N(6)-L-threonylcarbamoyladenosine(37) in tRNA + AMP + H(+). In terms of biological role, required for the formation of a threonylcarbamoyl group on adenosine at position 37 (t(6)A37) in tRNAs that read codons beginning with adenine. Is involved in the transfer of the threonylcarbamoyl moiety of threonylcarbamoyl-AMP (TC-AMP) to the N6 group of A37, together with TsaE and TsaB. TsaD likely plays a direct catalytic role in this reaction. The chain is tRNA N6-adenosine threonylcarbamoyltransferase from Neisseria meningitidis serogroup C / serotype 2a (strain ATCC 700532 / DSM 15464 / FAM18).